The following is an 86-amino-acid chain: MDPYKVIIRPLVTEKAVSLIERENKLTFIVDRRATKQDIKRAVEEMFNVKVAKVNTLVTMKGEKKAYVKLKPEYDASEIAARLGLF.

This sequence belongs to the universal ribosomal protein uL23 family. Part of the 50S ribosomal subunit. Contacts protein L29.

In terms of biological role, binds to 23S rRNA. One of the proteins that surrounds the polypeptide exit tunnel on the outside of the ribosome. The polypeptide is Large ribosomal subunit protein uL23 (Thermococcus kodakarensis (strain ATCC BAA-918 / JCM 12380 / KOD1) (Pyrococcus kodakaraensis (strain KOD1))).